Here is a 449-residue protein sequence, read N- to C-terminus: Transport protein ComB (449 aa).

The Cytoplasmic segment spans residues 1–20 (MKPEFLESAEFYNRRYHNFS). The helical transmembrane segment at 21-41 (SSVIVPMALLLVFLLGFATVA) threads the bilayer. Topologically, residues 42–449 (EKEMSLSTRA…YYLDQFLNKE (408 aa)) are extracellular.

Belongs to the membrane fusion protein (MFP) (TC 8.A.1) family.

It is found in the cell membrane. Required for induction of competence. This Streptococcus pneumoniae (strain ATCC BAA-255 / R6) protein is Transport protein ComB (comB).